The sequence spans 1137 residues: Eukaryotic translation initiation factor 3 subunit A (1137 aa).

Residues 319 to 501 enclose the PCI domain; it reads LQRMAAHVLL…NSIYFGTDLT (183 aa). 2 stretches are compositionally biased toward basic and acidic residues: residues 588 to 623 and 829 to 899; these read QNNAREEEEARRQEEESRKAKLAEQKRLEQEQEERE and AAEE…RGGD. Disordered stretches follow at residues 588–631 and 829–1137; these read QNNA…QNEI and AAEE…VKRR. Residue Ser908 is modified to Phosphoserine. 4 stretches are compositionally biased toward basic and acidic residues: residues 922–971, 985–1046, 1054–1083, and 1106–1127; these read RGIE…EPDS, SRDE…EPQR, DAPRHADRENRRTAGGERRDRDVRETRGDQ, and AREEKPATKRDQPQEKENKAAD.

Belongs to the eIF-3 subunit A family. As to quaternary structure, component of the eukaryotic translation initiation factor 3 (eIF-3) complex. The eIF-3 complex interacts with pix.

The protein resides in the cytoplasm. In terms of biological role, RNA-binding component of the eukaryotic translation initiation factor 3 (eIF-3) complex, which is involved in protein synthesis of a specialized repertoire of mRNAs and, together with other initiation factors, stimulates binding of mRNA and methionyl-tRNAi to the 40S ribosome. The eIF-3 complex specifically targets and initiates translation of a subset of mRNAs involved in cell proliferation. This Drosophila yakuba (Fruit fly) protein is Eukaryotic translation initiation factor 3 subunit A.